The sequence spans 207 residues: Small ribosomal subunit protein uS4c (207 aa).

Residues 92-156 (MRLDNILFRL…YQSIITKRIE (65 aa)) form the S4 RNA-binding domain.

The protein belongs to the universal ribosomal protein uS4 family. In terms of assembly, part of the 30S ribosomal subunit. Contacts protein S5. The interaction surface between S4 and S5 is involved in control of translational fidelity.

The protein localises to the plastid. The protein resides in the chloroplast. Functionally, one of the primary rRNA binding proteins, it binds directly to 16S rRNA where it nucleates assembly of the body of the 30S subunit. With S5 and S12 plays an important role in translational accuracy. The chain is Small ribosomal subunit protein uS4c (rps4) from Equisetum sylvaticum (Wood horsetail).